The chain runs to 206 residues: MGRYTGPTCRLCRREGMKLYLKGDKCYTDKCPFARRGYAPGQHGQEKKKLTNYGMQLREKQKLKRYYGVLERQFERLYEEAERMKGITGENLLQLLERRLDNVVFRLGFAASRPQARQLVSHGHIEVNGKKVDIPSFLVKPGDVISVREKSRSMELIKNNLEVSRNVPDWLELNKDAFEGRVVSLPRREHIDLPIQEHLIVELYSK.

In terms of domain architecture, S4 RNA-binding spans 98–158; sequence RRLDNVVFRL…EKSRSMELIK (61 aa).

It belongs to the universal ribosomal protein uS4 family. In terms of assembly, part of the 30S ribosomal subunit. Contacts protein S5. The interaction surface between S4 and S5 is involved in control of translational fidelity.

In terms of biological role, one of the primary rRNA binding proteins, it binds directly to 16S rRNA where it nucleates assembly of the body of the 30S subunit. With S5 and S12 plays an important role in translational accuracy. The chain is Small ribosomal subunit protein uS4 from Thermoanaerobacter pseudethanolicus (strain ATCC 33223 / 39E) (Clostridium thermohydrosulfuricum).